A 183-amino-acid polypeptide reads, in one-letter code: Cell division protein ZapC (183 aa).

Belongs to the ZapC family. As to quaternary structure, interacts directly with FtsZ.

It localises to the cytoplasm. In terms of biological role, contributes to the efficiency of the cell division process by stabilizing the polymeric form of the cell division protein FtsZ. Acts by promoting interactions between FtsZ protofilaments and suppressing the GTPase activity of FtsZ. This is Cell division protein ZapC from Xenorhabdus bovienii (strain SS-2004) (Xenorhabdus nematophila subsp. bovienii).